Here is a 275-residue protein sequence, read N- to C-terminus: Beta-lactamase OXA-2 (275 aa).

A signal peptide spans 1–21 (MAIRIFAILFSIFSLATFAHA). Ser72 acts as the Acyl-ester intermediate in catalysis. Lys75 is modified (N6-carboxylysine). 210-212 (KTG) serves as a coordination point for substrate.

It belongs to the class-D beta-lactamase family.

It carries out the reaction a beta-lactam + H2O = a substituted beta-amino acid. This is an oxacillin-hydrolyzing beta-lactamase. The protein is Beta-lactamase OXA-2 (bla) of Escherichia coli.